Consider the following 94-residue polypeptide: UPF0235 protein Dred_0717 (94 aa).

Belongs to the UPF0235 family.

In Desulforamulus reducens (strain ATCC BAA-1160 / DSM 100696 / MI-1) (Desulfotomaculum reducens), this protein is UPF0235 protein Dred_0717.